We begin with the raw amino-acid sequence, 267 residues long: Thiamine thiazole synthase (267 aa).

NAD(+) is bound by residues serine 41, 60 to 61 (ER), glycine 68, valine 132, and 160 to 162 (HVD). Aspartate 162 and histidine 177 together coordinate Fe cation. Methionine 227 provides a ligand contact to NAD(+). Residue arginine 237 coordinates glycine.

The protein belongs to the THI4 family. As to quaternary structure, homooctamer; tetramer of dimers. Fe(2+) serves as cofactor.

It catalyses the reaction hydrogen sulfide + glycine + NAD(+) = ADP-5-ethyl-4-methylthiazole-2-carboxylate + nicotinamide + 3 H2O + H(+). The protein operates within cofactor biosynthesis; thiamine diphosphate biosynthesis. Functionally, involved in the biosynthesis of the thiazole moiety of thiamine. Catalyzes the conversion of NAD and glycine to adenosine diphosphate 5-(2-hydroxyethyl)-4-methylthiazole-2-carboxylate (ADT), an adenylated thiazole intermediate, using free sulfide as a source of sulfur. This is Thiamine thiazole synthase from Saccharolobus islandicus (strain L.S.2.15 / Lassen #1) (Sulfolobus islandicus).